Reading from the N-terminus, the 63-residue chain is Small ribosomal subunit protein eS17 (63 aa).

The protein belongs to the eukaryotic ribosomal protein eS17 family.

The chain is Small ribosomal subunit protein eS17 from Methanococcus maripaludis (strain DSM 14266 / JCM 13030 / NBRC 101832 / S2 / LL).